The chain runs to 561 residues: Transmembrane protein 209 (561 aa).

Phosphoserine is present on residues Ser9 and Ser11. The chain crosses the membrane as a helical span at residues 28–48 (VVLAWGLLNVSMAGMIYTEMT). N-linked (GlcNAc...) asparagine glycosylation is present at Asn57. Residues 60–80 (YWPLWYIELALASLFSLNALF) traverse the membrane as a helical segment. Ser98 is subject to Phosphoserine. Disordered stretches follow at residues 119–157 (DLAA…FTTS) and 195–234 (FSPS…DKED). Residues 133 to 157 (SIQGQSVLSYSPSRSPSTSPKFTTS) are compositionally biased toward low complexity. 3 positions are modified to phosphoserine: Ser201, Ser222, and Ser248. The segment covering 220–229 (RSSPTVYNSP) has biased composition (polar residues). Residues 250-271 (EEKQHRVKLGSPDSTSPSSSPT) form a disordered region. Low complexity predominate over residues 260 to 271 (SPDSTSPSSSPT). An N-linked (GlcNAc...) asparagine glycan is attached at Asn274. Phosphoserine is present on Ser278.

As to quaternary structure, interacts with NUP205. In terms of tissue distribution, expressed in the testis.

The protein localises to the membrane. It is found in the nucleus envelope. Its subcellular location is the golgi apparatus. It localises to the cytoplasm. In terms of biological role, nuclear envelope protein which in association with NUP205, may be involved in nuclear transport of various nuclear proteins in addition to MYC. The chain is Transmembrane protein 209 (TMEM209) from Homo sapiens (Human).